Here is a 380-residue protein sequence, read N- to C-terminus: MAFVCLAIGCLYTFLISTTFGCTSSSDTEIKVNPPQDFEIVDPGYLGYLYLQWQPPLSLDHFKECTVEYELKYRNIGSETWKTIITKNLHYKDGFDLNKGIEAKIHTLLPWQCTNGSEVQSSWAETTYWISPQGIPETKVQDMDCVYYNWQYLLCSWKPGIGVLLDTNYNLFYWYEGLDHALQCVDYIKADGQNIGCRFPYLEASDYKDFYICVNGSSENKPIRSSYFTFQLQNIVKPLPPVYLTFTRESSCEIKLKWSIPLGPIPARCFDYEIEIREDDTTLVTATVENETYTLKTTNETRQLCFVVRSKVNIYCSDDGIWSEWSDKQCWEGEDLSKKTLLRFWLPFGFILILVIFVTGLLLRKPNTYPKMIPEFFCDT.

A signal peptide spans 1-26 (MAFVCLAIGCLYTFLISTTFGCTSSS). Residues 27–343 (DTEIKVNPPQ…EDLSKKTLLR (317 aa)) are Extracellular-facing. Fibronectin type-III domains follow at residues 34-134 (PPQD…SPQG), 139-235 (KVQD…LQNI), and 240-333 (PPVY…CWEG). An intrachain disulfide couples C65 to C113. Residue N115 is glycosylated (N-linked (GlcNAc...) asparagine). Cystine bridges form between C145-C155 and C184-C197. N-linked (GlcNAc...) asparagine glycosylation is found at N215, N290, and N299. A disulfide bridge connects residues C269 and C316. The WSXWS motif signature appears at 322–326 (WSEWS). Residues 344-363 (FWLPFGFILILVIFVTGLLL) traverse the membrane as a helical segment. Residues 364 to 380 (RKPNTYPKMIPEFFCDT) lie on the Cytoplasmic side of the membrane.

This sequence belongs to the type I cytokine receptor family. Type 5 subfamily. Interacts with IL4RA. Interacts with high affinity to interleukin-13 (IL13), but not to interleukin-4 (IL4). In terms of processing, cleaved by MMP8 leading to a soluble form that is also able to interact with IL13.

It is found in the cell membrane. Its function is as follows. Cell surface receptor that plays a role in the regulation of IL-13-mediated responses. Functions as a decoy receptor that inhibits IL-13- and IL-4-mediated signal transduction via the JAK-STAT pathway and thereby modulates immune responses and inflammation. Serves as a functional signaling receptor for IL-13 in an alternative pathway involving AP-1 ultimately leading to the production of TGFB1. This chain is Interleukin-13 receptor subunit alpha-2 (IL13RA2), found in Homo sapiens (Human).